An 848-amino-acid chain; its full sequence is Adenylate cyclase (848 aa).

Positions 1-535 (MYLYIETLKQ…DVSHHFPLRL (535 aa)) are catalytic. The interval 541-848 (KALYSPCEIR…DAPLLQQYFS (308 aa)) is regulatory. At His609 the chain carries Phosphohistidine; by CRR.

The protein belongs to the adenylyl cyclase class-1 family.

The protein resides in the cytoplasm. The enzyme catalyses ATP = 3',5'-cyclic AMP + diphosphate. This is Adenylate cyclase (cyaA) from Escherichia coli O6:H1 (strain CFT073 / ATCC 700928 / UPEC).